The following is a 280-amino-acid chain: Cell division control protein 2 homolog B (280 aa).

Residues 1–5 (AYGVV) and Lys-20 each bind ATP. The Protein kinase domain maps to 1–274 (AYGVVYKARD…AKKALEHEYF (274 aa)). Tyr-2 is subject to Phosphotyrosine. Asp-114 serves as the catalytic Proton acceptor. Thr-148 carries the post-translational modification Phosphothreonine; by CAK.

Belongs to the protein kinase superfamily. CMGC Ser/Thr protein kinase family. CDC2/CDKX subfamily.

The enzyme catalyses L-seryl-[protein] + ATP = O-phospho-L-seryl-[protein] + ADP + H(+). It carries out the reaction L-threonyl-[protein] + ATP = O-phospho-L-threonyl-[protein] + ADP + H(+). It catalyses the reaction [DNA-directed RNA polymerase] + ATP = phospho-[DNA-directed RNA polymerase] + ADP + H(+). Its activity is regulated as follows. Phosphorylation at Tyr-2 inactivates the enzyme, while phosphorylation at Thr-148 activates it. Its function is as follows. Plays a key role in the control of the eukaryotic cell cycle. This chain is Cell division control protein 2 homolog B (CDC2B), found in Antirrhinum majus (Garden snapdragon).